The chain runs to 142 residues: Hemoglobin subunit alpha-2 (142 aa).

The Globin domain occupies 2–142 (LLTADDKKHI…VSSVLTSKYR (141 aa)). O2 is bound at residue His-59. His-88 serves as a coordination point for heme b.

Belongs to the globin family. Heterotetramer of two alpha chains and two beta chains. In terms of tissue distribution, red blood cells.

Functionally, involved in oxygen transport from the lung to the various peripheral tissues. The protein is Hemoglobin subunit alpha-2 (hba2) of Xenopus borealis (Kenyan clawed frog).